A 248-amino-acid chain; its full sequence is Leucyl/phenylalanyl-tRNA--protein transferase (248 aa).

It belongs to the L/F-transferase family.

It localises to the cytoplasm. The enzyme catalyses N-terminal L-lysyl-[protein] + L-leucyl-tRNA(Leu) = N-terminal L-leucyl-L-lysyl-[protein] + tRNA(Leu) + H(+). It catalyses the reaction N-terminal L-arginyl-[protein] + L-leucyl-tRNA(Leu) = N-terminal L-leucyl-L-arginyl-[protein] + tRNA(Leu) + H(+). It carries out the reaction L-phenylalanyl-tRNA(Phe) + an N-terminal L-alpha-aminoacyl-[protein] = an N-terminal L-phenylalanyl-L-alpha-aminoacyl-[protein] + tRNA(Phe). In terms of biological role, functions in the N-end rule pathway of protein degradation where it conjugates Leu, Phe and, less efficiently, Met from aminoacyl-tRNAs to the N-termini of proteins containing an N-terminal arginine or lysine. The sequence is that of Leucyl/phenylalanyl-tRNA--protein transferase from Oleidesulfovibrio alaskensis (strain ATCC BAA-1058 / DSM 17464 / G20) (Desulfovibrio alaskensis).